The following is an 85-amino-acid chain: Large ribosomal subunit protein bL27 (85 aa).

Gly residues predominate over residues 1–10 (MAQKKGGGST). The interval 1–21 (MAQKKGGGSTRNGRDSQPKML) is disordered.

The protein belongs to the bacterial ribosomal protein bL27 family.

In Polaromonas naphthalenivorans (strain CJ2), this protein is Large ribosomal subunit protein bL27.